The following is a 460-amino-acid chain: tRNA(Ile)-lysidine synthase (460 aa).

Residue 37–42 (SGGADS) coordinates ATP.

This sequence belongs to the tRNA(Ile)-lysidine synthase family.

Its subcellular location is the cytoplasm. The catalysed reaction is cytidine(34) in tRNA(Ile2) + L-lysine + ATP = lysidine(34) in tRNA(Ile2) + AMP + diphosphate + H(+). In terms of biological role, ligates lysine onto the cytidine present at position 34 of the AUA codon-specific tRNA(Ile) that contains the anticodon CAU, in an ATP-dependent manner. Cytidine is converted to lysidine, thus changing the amino acid specificity of the tRNA from methionine to isoleucine. The protein is tRNA(Ile)-lysidine synthase of Treponema denticola (strain ATCC 35405 / DSM 14222 / CIP 103919 / JCM 8153 / KCTC 15104).